We begin with the raw amino-acid sequence, 338 residues long: Elongation factor Ts, mitochondrial (338 aa).

A mitochondrion-targeting transit peptide spans 1 to 55 (MSLLRSLRLCLVARTGSCPLSALGPGPLLPSLQAGLPLLQSPQQWHTFHSGSWLS). N6-succinyllysine is present on residues Lys-89, Lys-146, and Lys-205. Residue Ser-283 is modified to Phosphoserine.

It belongs to the EF-Ts family.

Its subcellular location is the mitochondrion. Its function is as follows. Associates with the EF-Tu.GDP complex and induces the exchange of GDP to GTP. It remains bound to the aminoacyl-tRNA.EF-Tu.GTP complex up to the GTP hydrolysis stage on the ribosome. This is Elongation factor Ts, mitochondrial from Bos taurus (Bovine).